Consider the following 200-residue polypeptide: MPEASTSAPRQATVTRKTSETDISATLSLDGTGTSSIQTGVGFLDHMLTSFSRHSRIDLAVICKGDLEVDDHHSVEDVAIVIGSAILQALGSRAGIRRFGSALVPMDESLARAAVDLGGRSFAVVKAEFGRPVIQGMSTEMVGHFFTSIASGLKANIHIAVLDGHNTHHMIEAMFKAFALAMKDAVCIEGGGIPSTKGVL.

Belongs to the imidazoleglycerol-phosphate dehydratase family.

It localises to the cytoplasm. The enzyme catalyses D-erythro-1-(imidazol-4-yl)glycerol 3-phosphate = 3-(imidazol-4-yl)-2-oxopropyl phosphate + H2O. Its pathway is amino-acid biosynthesis; L-histidine biosynthesis; L-histidine from 5-phospho-alpha-D-ribose 1-diphosphate: step 6/9. In Chlorobium luteolum (strain DSM 273 / BCRC 81028 / 2530) (Pelodictyon luteolum), this protein is Imidazoleglycerol-phosphate dehydratase.